A 493-amino-acid chain; its full sequence is 5'-3' exonuclease PLD3 (493 aa).

The Cytoplasmic portion of the chain corresponds to 1–37 (MSSKVEYKPIQPHEEAENHFLQHELHKVKARKYYRCA). The chain crosses the membrane as a helical; Signal-anchor for type II membrane protein span at residues 38–58 (LVVAIIITLVFCILASQLLLF). Topologically, residues 59–493 (PFLSITSQTT…LSSWKEKCIF (435 aa)) are lumenal. N-linked (GlcNAc...) asparagine glycosylation occurs at N99. The 28-residue stretch at 197–224 (TDGILHTKFWVVDNEHFYIGSANMDWRS) folds into the PLD phosphodiesterase 1 domain. Catalysis depends on residues H202, K204, and D209. N-linked (GlcNAc...) asparagine glycosylation is found at N237, N259, N269, N285, and N388. A PLD phosphodiesterase 2 domain is found at 412 to 438 (YARVNHNKYMVTDRVAYIGTSNWSGDY). Active-site residues include H417, K419, and D424. N-linked (GlcNAc...) asparagine glycans are attached at residues N433, N450, and N476.

It belongs to the phospholipase D family. N-glycosylated. Post-translationally, proteolytically processed to a soluble form that is stable within endosomes and lysosomes. During transport through the secretory pathway becomes proteolysed by cysteine proteases, thereby releasing a stable soluble lysosomal lumenal polypeptide, whereas the transmembrane-bound fragment is rapidly degraded. Its transport route to lysosomes involves ubiquitination and the ESCRT complex. In terms of processing, ubiquitinated. Ubiquitination mediates sorting into lysosomes.

Its subcellular location is the endoplasmic reticulum membrane. The protein localises to the lysosome lumen. It localises to the early endosome membrane. It is found in the late endosome membrane. The protein resides in the golgi apparatus membrane. Its subcellular location is the endosome membrane. It catalyses the reaction Exonucleolytic cleavage in the 5'- to 3'-direction to yield nucleoside 3'-phosphates.. 5'-&gt;3' DNA exonuclease which digests single-stranded DNA (ssDNA). Regulates inflammatory cytokine responses via the degradation of nucleic acids, by reducing the concentration of ssDNA able to stimulate TLR9, a nucleotide-sensing receptor in collaboration with PLD4. May be important in myotube formation. Plays a role in lysosomal homeostasis. Involved in the regulation of endosomal protein sorting. This is 5'-3' exonuclease PLD3 (pld3) from Xenopus laevis (African clawed frog).